Consider the following 107-residue polypeptide: UPF0122 protein BLi01817/BL02321 (107 aa).

It belongs to the UPF0122 family.

Functionally, might take part in the signal recognition particle (SRP) pathway. This is inferred from the conservation of its genetic proximity to ftsY/ffh. May be a regulatory protein. The chain is UPF0122 protein BLi01817/BL02321 from Bacillus licheniformis (strain ATCC 14580 / DSM 13 / JCM 2505 / CCUG 7422 / NBRC 12200 / NCIMB 9375 / NCTC 10341 / NRRL NRS-1264 / Gibson 46).